A 648-amino-acid polypeptide reads, in one-letter code: DNA ligase (648 aa).

Residues 63–67 (DILYD) and 105–106 (ST) each bind NAD(+). Catalysis depends on lysine 143, which acts as the N6-AMP-lysine intermediate. Residues arginine 159, glutamate 190, and lysine 302 each coordinate NAD(+). The Zn(2+) site is built by cysteine 390, cysteine 393, cysteine 406, and cysteine 412. The 79-residue stretch at 570–648 (SLASPLTGKI…SEQEYLDLIS (79 aa)) folds into the BRCT domain.

This sequence belongs to the NAD-dependent DNA ligase family. LigA subfamily. Mg(2+) serves as cofactor. Mn(2+) is required as a cofactor.

The catalysed reaction is NAD(+) + (deoxyribonucleotide)n-3'-hydroxyl + 5'-phospho-(deoxyribonucleotide)m = (deoxyribonucleotide)n+m + AMP + beta-nicotinamide D-nucleotide.. In terms of biological role, DNA ligase that catalyzes the formation of phosphodiester linkages between 5'-phosphoryl and 3'-hydroxyl groups in double-stranded DNA using NAD as a coenzyme and as the energy source for the reaction. It is essential for DNA replication and repair of damaged DNA. This is DNA ligase from Shewanella baltica (strain OS155 / ATCC BAA-1091).